A 472-amino-acid chain; its full sequence is L-fuculokinase (472 aa).

Belongs to the FGGY kinase family. The cofactor is a divalent metal cation.

It catalyses the reaction L-fuculose + ATP = L-fuculose 1-phosphate + ADP + H(+). It functions in the pathway carbohydrate degradation; L-fucose degradation; L-lactaldehyde and glycerone phosphate from L-fucose: step 2/3. In terms of biological role, catalyzes the phosphorylation of L-fuculose. In Salmonella typhi, this protein is L-fuculokinase.